Consider the following 273-residue polypeptide: Formamidopyrimidine-DNA glycosylase (273 aa).

Pro-2 serves as the catalytic Schiff-base intermediate with DNA. The active-site Proton donor is Glu-3. The Proton donor; for beta-elimination activity role is filled by Lys-58. Residues His-92, Arg-111, and Lys-153 each contribute to the DNA site. Residues 238–272 (KVYGREGQSCLSCSSTIIKIKHSGRSTFYCKTCQY) form an FPG-type zinc finger. Residue Arg-262 is the Proton donor; for delta-elimination activity of the active site.

It belongs to the FPG family. As to quaternary structure, monomer. Requires Zn(2+) as cofactor.

The catalysed reaction is Hydrolysis of DNA containing ring-opened 7-methylguanine residues, releasing 2,6-diamino-4-hydroxy-5-(N-methyl)formamidopyrimidine.. The enzyme catalyses 2'-deoxyribonucleotide-(2'-deoxyribose 5'-phosphate)-2'-deoxyribonucleotide-DNA = a 3'-end 2'-deoxyribonucleotide-(2,3-dehydro-2,3-deoxyribose 5'-phosphate)-DNA + a 5'-end 5'-phospho-2'-deoxyribonucleoside-DNA + H(+). In terms of biological role, involved in base excision repair of DNA damaged by oxidation or by mutagenic agents. Acts as a DNA glycosylase that recognizes and removes damaged bases. Has a preference for oxidized purines, such as 7,8-dihydro-8-oxoguanine (8-oxoG). Has AP (apurinic/apyrimidinic) lyase activity and introduces nicks in the DNA strand. Cleaves the DNA backbone by beta-delta elimination to generate a single-strand break at the site of the removed base with both 3'- and 5'-phosphates. This is Formamidopyrimidine-DNA glycosylase from Rickettsia conorii (strain ATCC VR-613 / Malish 7).